The chain runs to 116 residues: S-adenosylmethionine decarboxylase proenzyme (116 aa).

The active-site Schiff-base intermediate with substrate; via pyruvic acid is the Ser63. Pyruvic acid (Ser); by autocatalysis is present on Ser63. The active-site Proton acceptor; for processing activity is His68. Cys83 acts as the Proton donor; for catalytic activity in catalysis.

It belongs to the prokaryotic AdoMetDC family. Type 1 subfamily. In terms of assembly, heterotetramer of two alpha and two beta chains arranged as a dimer of alpha/beta heterodimers. It depends on pyruvate as a cofactor. In terms of processing, is synthesized initially as an inactive proenzyme. Formation of the active enzyme involves a self-maturation process in which the active site pyruvoyl group is generated from an internal serine residue via an autocatalytic post-translational modification. Two non-identical subunits are generated from the proenzyme in this reaction, and the pyruvate is formed at the N-terminus of the alpha chain, which is derived from the carboxyl end of the proenzyme. The post-translation cleavage follows an unusual pathway, termed non-hydrolytic serinolysis, in which the side chain hydroxyl group of the serine supplies its oxygen atom to form the C-terminus of the beta chain, while the remainder of the serine residue undergoes an oxidative deamination to produce ammonia and the pyruvoyl group blocking the N-terminus of the alpha chain.

It carries out the reaction S-adenosyl-L-methionine + H(+) = S-adenosyl 3-(methylsulfanyl)propylamine + CO2. Its pathway is amine and polyamine biosynthesis; S-adenosylmethioninamine biosynthesis; S-adenosylmethioninamine from S-adenosyl-L-methionine: step 1/1. Catalyzes the decarboxylation of S-adenosylmethionine to S-adenosylmethioninamine (dcAdoMet), the propylamine donor required for the synthesis of the polyamines spermine and spermidine from the diamine putrescine. This chain is S-adenosylmethionine decarboxylase proenzyme, found in Clostridium botulinum (strain ATCC 19397 / Type A).